We begin with the raw amino-acid sequence, 673 residues long: MNDQGIKESIETLKEQIRKYDYHYYVLDEPLVPDAEYDRCFKALQQYEEQYPQFLSPDSPTQRVSGTPSDAFMPVAHKQPMLSLSNVFTTDELKAFIKRAIEKLDEPNQQLVFACEPKLDGLAVNMTYEGGILTHAATRGDGAVGENITANIKTIASVPLRLRVSNPPKLIEVRGEVYIPKADFEAYNARARELGEKTFANPRNAAAGSLRQLNPEISASRPLAIYCYGIGACEDYKLPNSHLEQLNLLKEFGFRVSPETRRAVGVEGCLDYYQYMLAKRNQLPFEIDGVVYKIDSISLQQQLGYVSRAPRFACAHKFPATEEMTRLIAVDFQVGRTGAVTPVARLEPVSVGGVTVSNATLHNFDEITRKDIRIGDTVIIRRAGDVIPEVVSVILEKRPANARMIELPKNCPVCGSEVVREADEAIARCVGGLYCKAQLKRMMWHFASRKAMYIEGLGSVLIDQLVDEGIVHHLADLYELDLQTLANLPRMGEKSAKNLLSALEKSKKTTFNRFLYALGIREIGEAGARVLAEHYCDVESLKAATIEELMTLNDIGPVAASHIVHFFAQAHNLEVIDRLLELGIHWPKPEKIQVNQQNPFFGKTVVLTGTLSTMGREEAKAKLLALGAKVSGSVSSKTDYVVAGSEAGSKLIKATELGVAIIEEDEFLKWVNS.

Residues 34-38 (DAEYD), 83-84 (SL), and glutamate 116 each bind NAD(+). The N6-AMP-lysine intermediate role is filled by lysine 118. Residues arginine 139, glutamate 176, lysine 293, and lysine 317 each coordinate NAD(+). 4 residues coordinate Zn(2+): cysteine 411, cysteine 414, cysteine 429, and cysteine 435. Residues 595–673 (NQQNPFFGKT…EDEFLKWVNS (79 aa)) form the BRCT domain.

It belongs to the NAD-dependent DNA ligase family. LigA subfamily. Mg(2+) serves as cofactor. Mn(2+) is required as a cofactor.

It carries out the reaction NAD(+) + (deoxyribonucleotide)n-3'-hydroxyl + 5'-phospho-(deoxyribonucleotide)m = (deoxyribonucleotide)n+m + AMP + beta-nicotinamide D-nucleotide.. Its function is as follows. DNA ligase that catalyzes the formation of phosphodiester linkages between 5'-phosphoryl and 3'-hydroxyl groups in double-stranded DNA using NAD as a coenzyme and as the energy source for the reaction. It is essential for DNA replication and repair of damaged DNA. This chain is DNA ligase, found in Legionella pneumophila subsp. pneumophila (strain Philadelphia 1 / ATCC 33152 / DSM 7513).